We begin with the raw amino-acid sequence, 1171 residues long: ATP-dependent helicase/deoxyribonuclease subunit B (1171 aa).

One can recognise a UvrD-like helicase ATP-binding domain in the interval 1–343 (MSLRFVIGRA…LVAEENYRYR (343 aa)). 8-15 (GRAGSGKS) is a binding site for ATP. Residues 281-587 (MEQPRFHSPA…QFANIPPSLD (307 aa)) enclose the UvrD-like helicase C-terminal domain. C805, C1129, C1132, and C1138 together coordinate [4Fe-4S] cluster.

The protein belongs to the helicase family. AddB/RexB type 1 subfamily. In terms of assembly, heterodimer of AddA and AddB. Mg(2+) serves as cofactor. It depends on [4Fe-4S] cluster as a cofactor.

Its function is as follows. The heterodimer acts as both an ATP-dependent DNA helicase and an ATP-dependent, dual-direction single-stranded exonuclease. Recognizes the chi site generating a DNA molecule suitable for the initiation of homologous recombination. The AddB subunit has 5' -&gt; 3' nuclease activity but not helicase activity. This chain is ATP-dependent helicase/deoxyribonuclease subunit B, found in Bacillus thuringiensis subsp. konkukian (strain 97-27).